Consider the following 1392-residue polypeptide: ATP-dependent helicase/nuclease subunit A (1392 aa).

Residues 3 to 489 (NPKWTPAQQA…IDLNQNFRSR (487 aa)) form the UvrD-like helicase ATP-binding domain. An ATP-binding site is contributed by 24–31 (AAAGSGKT). Disordered regions lie at residues 291–319 (RGSK…KARD), 555–594 (KRGA…LEEA), and 1051–1126 (GPVQ…LDTK). Basic and acidic residues-rich tracts occupy residues 305–319 (ENSK…KARD) and 567–583 (SPAK…REPE). Residues 556–886 (RGAEDAATEV…RFITVHSSKG (331 aa)) enclose the UvrD-like helicase C-terminal domain. Over residues 584-594 (SGDDESSLEEA) the composition is skewed to acidic residues. A compositionally biased stretch (basic and acidic residues) spans 1088-1113 (ASGKTEIPGETKNSEETKTSEDKKNL).

Belongs to the helicase family. AddA subfamily. In terms of assembly, heterodimer of AddA and AddB/RexB. Mg(2+) serves as cofactor.

The catalysed reaction is Couples ATP hydrolysis with the unwinding of duplex DNA by translocating in the 3'-5' direction.. It carries out the reaction ATP + H2O = ADP + phosphate + H(+). The heterodimer acts as both an ATP-dependent DNA helicase and an ATP-dependent, dual-direction single-stranded exonuclease. Recognizes the chi site generating a DNA molecule suitable for the initiation of homologous recombination. The AddA nuclease domain is required for chi fragment generation; this subunit has the helicase and 3' -&gt; 5' nuclease activities. The sequence is that of ATP-dependent helicase/nuclease subunit A from Desulfitobacterium hafniense (strain DSM 10664 / DCB-2).